The primary structure comprises 122 residues: Large ribosomal subunit protein uL14 (122 aa).

The protein belongs to the universal ribosomal protein uL14 family. In terms of assembly, part of the 50S ribosomal subunit. Forms a cluster with proteins L3 and L19. In the 70S ribosome, L14 and L19 interact and together make contacts with the 16S rRNA in bridges B5 and B8.

Binds to 23S rRNA. Forms part of two intersubunit bridges in the 70S ribosome. This chain is Large ribosomal subunit protein uL14, found in Caldicellulosiruptor bescii (strain ATCC BAA-1888 / DSM 6725 / KCTC 15123 / Z-1320) (Anaerocellum thermophilum).